Here is a 296-residue protein sequence, read N- to C-terminus: Cobalamin trafficking protein CblD (296 aa).

The transit peptide at 1–38 (MANVLCNRARLVSYLPGFCSLVKRVVNPKAFSTAGSSG) directs the protein to the mitochondrion. The residue at position 203 (lysine 203) is an N6-acetyllysine.

Heterodimer with MMACHC. Forms a multiprotein complex with MMACHC, MTR and MTRR. As to expression, widely expressed at high levels.

The protein resides in the cytoplasm. It localises to the mitochondrion. Its function is as follows. Involved in cobalamin metabolism and trafficking. Plays a role in regulating the biosynthesis and the proportion of two coenzymes, methylcob(III)alamin (MeCbl) and 5'-deoxyadenosylcobalamin (AdoCbl). Promotes oxidation of cob(II)alamin bound to MMACHC. The processing of cobalamin in the cytosol occurs in a multiprotein complex composed of at least MMACHC, MMADHC, MTRR (methionine synthase reductase) and MTR (methionine synthase) which may contribute to shuttle safely and efficiently cobalamin towards MTR in order to produce methionine. This Homo sapiens (Human) protein is Cobalamin trafficking protein CblD.